A 73-amino-acid chain; its full sequence is uncharacterized protein (73 aa).

The interval 1-32 is disordered; it reads MFLSSAVRKDSNGVRHLPSVQRWTPGSPPTRA.

This is an uncharacterized protein from Frog virus 3 (isolate Goorha) (FV-3).